Here is a 232-residue protein sequence, read N- to C-terminus: Ras association domain-containing protein 3 (232 aa).

The residue at position 2 (serine 2) is an N-acetylserine. Residues 25-46 form a disordered region; sequence RAPPGKSRSGQPDVEKEKETHN. Residues 37 to 46 show a composition bias toward basic and acidic residues; it reads DVEKEKETHN. One can recognise a Ras-associating domain in the interval 78-180; it reads YTGFIKVQME…TLSFVLREHE (103 aa). Positions 181–228 constitute an SARAH domain; it reads IGEWEAFSLPELQNFLRILDKEEDEQLQSLKRRYTAYRQKLEEALGEV.

The protein resides in the cytoplasm. Its subcellular location is the cytoskeleton. The polypeptide is Ras association domain-containing protein 3 (Rassf3) (Mus musculus (Mouse)).